The following is a 429-amino-acid chain: UDP-N-acetylglucosamine 1-carboxyvinyltransferase (429 aa).

22–23 is a binding site for phosphoenolpyruvate; the sequence is KN. Arginine 102 provides a ligand contact to UDP-N-acetyl-alpha-D-glucosamine. The Proton donor role is filled by cysteine 126. Cysteine 126 carries the 2-(S-cysteinyl)pyruvic acid O-phosphothioketal modification. Residues 131–135, aspartate 316, and isoleucine 338 contribute to the UDP-N-acetyl-alpha-D-glucosamine site; that span reads RPVDL.

Belongs to the EPSP synthase family. MurA subfamily.

The protein localises to the cytoplasm. The enzyme catalyses phosphoenolpyruvate + UDP-N-acetyl-alpha-D-glucosamine = UDP-N-acetyl-3-O-(1-carboxyvinyl)-alpha-D-glucosamine + phosphate. The protein operates within cell wall biogenesis; peptidoglycan biosynthesis. Its function is as follows. Cell wall formation. Adds enolpyruvyl to UDP-N-acetylglucosamine. This Nitrobacter winogradskyi (strain ATCC 25391 / DSM 10237 / CIP 104748 / NCIMB 11846 / Nb-255) protein is UDP-N-acetylglucosamine 1-carboxyvinyltransferase.